Here is a 130-residue protein sequence, read N- to C-terminus: Ribosome-binding factor A (130 aa).

The protein belongs to the RbfA family. Monomer. Binds 30S ribosomal subunits, but not 50S ribosomal subunits or 70S ribosomes.

The protein resides in the cytoplasm. Its function is as follows. One of several proteins that assist in the late maturation steps of the functional core of the 30S ribosomal subunit. Associates with free 30S ribosomal subunits (but not with 30S subunits that are part of 70S ribosomes or polysomes). Required for efficient processing of 16S rRNA. May interact with the 5'-terminal helix region of 16S rRNA. This chain is Ribosome-binding factor A, found in Flavobacterium johnsoniae (strain ATCC 17061 / DSM 2064 / JCM 8514 / BCRC 14874 / CCUG 350202 / NBRC 14942 / NCIMB 11054 / UW101) (Cytophaga johnsonae).